The primary structure comprises 251 residues: MSLAVRVIPCLDVDNGRVVKGVNFQNLRDAGDPVEMAKLYDAEGADELTFLDITASSGDRETTYDVVRRTAEQVFIPLTVGGGVRTPDDVDKLLRAGADKVGVNTAAIARPDLIREIAERFGRQVLVLSVDARRTPEGTFEVTTHGGRKGTGIDAVEWAHRAAELGAGEILLNSMDADGTKDGYDTEMIEAVRKHVTVPVIASGGAGRLADFAPAIEAGADAVLAASVFHFGDLRILEVKGALREAGHPVR.

Residues Asp-12 and Asp-131 contribute to the active site.

The protein belongs to the HisA/HisF family. As to quaternary structure, heterodimer of HisH and HisF.

It localises to the cytoplasm. It catalyses the reaction 5-[(5-phospho-1-deoxy-D-ribulos-1-ylimino)methylamino]-1-(5-phospho-beta-D-ribosyl)imidazole-4-carboxamide + L-glutamine = D-erythro-1-(imidazol-4-yl)glycerol 3-phosphate + 5-amino-1-(5-phospho-beta-D-ribosyl)imidazole-4-carboxamide + L-glutamate + H(+). The protein operates within amino-acid biosynthesis; L-histidine biosynthesis; L-histidine from 5-phospho-alpha-D-ribose 1-diphosphate: step 5/9. IGPS catalyzes the conversion of PRFAR and glutamine to IGP, AICAR and glutamate. The HisF subunit catalyzes the cyclization activity that produces IGP and AICAR from PRFAR using the ammonia provided by the HisH subunit. The sequence is that of Imidazole glycerol phosphate synthase subunit HisF from Streptomyces griseus subsp. griseus (strain JCM 4626 / CBS 651.72 / NBRC 13350 / KCC S-0626 / ISP 5235).